The primary structure comprises 101 residues: Small ribosomal subunit protein uS14 (101 aa).

This sequence belongs to the universal ribosomal protein uS14 family. In terms of assembly, part of the 30S ribosomal subunit. Contacts proteins S3 and S10.

Functionally, binds 16S rRNA, required for the assembly of 30S particles and may also be responsible for determining the conformation of the 16S rRNA at the A site. In Synechococcus sp. (strain JA-2-3B'a(2-13)) (Cyanobacteria bacterium Yellowstone B-Prime), this protein is Small ribosomal subunit protein uS14.